A 476-amino-acid chain; its full sequence is Adenosylhomocysteinase (476 aa).

Positions 62, 141, and 201 each coordinate substrate. Position 202 to 204 (202 to 204 (TTT)) interacts with NAD(+). Substrate-binding residues include Lys-231 and Asp-235. Residues Asn-236, 265–270 (GYGDVG), Glu-288, Asn-323, 344–346 (IGH), and Asn-389 each bind NAD(+).

This sequence belongs to the adenosylhomocysteinase family. NAD(+) serves as cofactor.

The protein localises to the cytoplasm. It carries out the reaction S-adenosyl-L-homocysteine + H2O = L-homocysteine + adenosine. Its pathway is amino-acid biosynthesis; L-homocysteine biosynthesis; L-homocysteine from S-adenosyl-L-homocysteine: step 1/1. Its function is as follows. May play a key role in the regulation of the intracellular concentration of adenosylhomocysteine. The sequence is that of Adenosylhomocysteinase from Delftia acidovorans (strain DSM 14801 / SPH-1).